Here is a 140-residue protein sequence, read N- to C-terminus: Fluoride-specific ion channel FluC 1 (140 aa).

The next 4 membrane-spanning stretches (helical) occupy residues Leu4–Ile24, Phe32–Thr52, Thr70–Leu90, and Leu99–Leu119. The Na(+) site is built by Gly74 and Thr77.

This sequence belongs to the fluoride channel Fluc/FEX (TC 1.A.43) family.

It localises to the cell membrane. The enzyme catalyses fluoride(in) = fluoride(out). Na(+) is not transported, but it plays an essential structural role and its presence is essential for fluoride channel function. In terms of biological role, fluoride-specific ion channel. Important for reducing fluoride concentration in the cell, thus reducing its toxicity. This Moorella thermoacetica (strain ATCC 39073 / JCM 9320) protein is Fluoride-specific ion channel FluC 1.